Consider the following 302-residue polypeptide: MMPIPATSTDSAAIPQTLLDAYALLAWRAMLTEVNLSPKPGLVDRINCGAHKDMALEDFHRSALAIQGWLPRFIEYGASCAQLPSDDVLKGLRPLGMACEADMFRATAGVNTHKGSIFSLGLLCAAIGRLHQQHSPITPANICSTAATFCRGLTERELRQNNQQLTAGQRLYQQLGLTGARGEAEAGYPLVIRHALPHYRALLAQGRDPELALLDTLLLLISMNGDTNVASRGGAEGLCWIQQQATTLLRQGGIRSPADLEHLHRFDQQCIARNLSPGGSADLLIVTWFLAQISQVNHLHNY.

This sequence belongs to the CitG/MdcB family.

It carries out the reaction 3'-dephospho-CoA + ATP = 2'-(5''-triphospho-alpha-D-ribosyl)-3'-dephospho-CoA + adenine. This Citrobacter koseri (strain ATCC BAA-895 / CDC 4225-83 / SGSC4696) protein is Probable 2-(5''-triphosphoribosyl)-3'-dephosphocoenzyme-A synthase.